We begin with the raw amino-acid sequence, 259 residues long: Imidazole glycerol phosphate synthase subunit HisF (259 aa).

Catalysis depends on residues Asp-11 and Asp-130.

The protein belongs to the HisA/HisF family. Heterodimer of HisH and HisF.

It is found in the cytoplasm. It carries out the reaction 5-[(5-phospho-1-deoxy-D-ribulos-1-ylimino)methylamino]-1-(5-phospho-beta-D-ribosyl)imidazole-4-carboxamide + L-glutamine = D-erythro-1-(imidazol-4-yl)glycerol 3-phosphate + 5-amino-1-(5-phospho-beta-D-ribosyl)imidazole-4-carboxamide + L-glutamate + H(+). Its pathway is amino-acid biosynthesis; L-histidine biosynthesis; L-histidine from 5-phospho-alpha-D-ribose 1-diphosphate: step 5/9. In terms of biological role, IGPS catalyzes the conversion of PRFAR and glutamine to IGP, AICAR and glutamate. The HisF subunit catalyzes the cyclization activity that produces IGP and AICAR from PRFAR using the ammonia provided by the HisH subunit. In Solidesulfovibrio magneticus (strain ATCC 700980 / DSM 13731 / RS-1) (Desulfovibrio magneticus), this protein is Imidazole glycerol phosphate synthase subunit HisF.